We begin with the raw amino-acid sequence, 354 residues long: Guanine nucleotide-binding protein G(t) subunit alpha-3 (354 aa).

The segment at Met-1–Ala-27 is disordered. Gly-2 is lipidated: N-myristoyl glycine. The segment covering Glu-8–Ala-27 has biased composition (basic and acidic residues). One can recognise a G-alpha domain in the interval Arg-32–Phe-354. A G1 motif region spans residues Lys-35–Thr-48. Residues Gly-40 to Ser-47, Leu-175 to Thr-181, Asp-200 to Gln-204, Asn-269 to Asp-272, and Ala-326 each bind GTP. 2 residues coordinate Mg(2+): Ser-47 and Thr-181. Residues Asp-173–Thr-181 form a G2 motif region. Residues Phe-196–Arg-205 form a G3 motif region. The interval Val-265 to Asp-272 is G4 motif. The tract at residues Thr-324–Thr-329 is G5 motif.

The protein belongs to the G-alpha family. G(i/o/t/z) subfamily. G proteins are composed of 3 units; alpha, beta and gamma, respectively GNAT3, GNB1 and GNG13 for Gustducin heterotrimer for bitter taste transduction. The alpha chain contains the guanine nucleotide binding site. Component of the TAS2R14-GNAT3 complex, consisting of TAS2R14, GNAT3, GNB1 and GNG2; within the complex interacts with TAS2R14; this complex plays a role in the perception of bitterness. Gustducin heterotrimer may also be composed of GNAT3, GNB3 and GNG13. Post-translationally, potential N-myristoylation may anchor alpha-subunit to the inner surface of plasma membrane. As to expression, expressed in taste buds (sensory organs of clustered epithelial cells) of the circumvallate, foliate and fungiform papillae of the tongue, as well as in nasoincisor, palatal and epiglottal taste buds at protein level. Expressed in enteroendocrine of the gut, in the lumenal pole of a subset of brush cells lining the stomach and the intestine at protein level. Detected in solitary cells throughout the respiratory track. Expressed also in spermatozoa.

The protein localises to the cytoplasm. In terms of biological role, guanine nucleotide-binding protein (G protein) alpha subunit playing a prominent role in bitter and sweet taste transduction as well as in umami (monosodium glutamate, monopotassium glutamate, and inosine monophosphate) taste transduction. Transduction by this alpha subunit involves coupling of specific cell-surface receptors with a cGMP-phosphodiesterase; Activation of phosphodiesterase lowers intracellular levels of cAMP and cGMP which may open a cyclic nucleotide-suppressible cation channel leading to influx of calcium, ultimately leading to release of neurotransmitter. Indeed, denatonium and strychnine induce transient reduction in cAMP and cGMP in taste tissue, whereas this decrease is inhibited by GNAT3 antibody. Gustducin heterotrimer transduces response to bitter and sweet compounds via regulation of phosphodiesterase for alpha subunit, as well as via activation of phospholipase C for beta and gamma subunits, with ultimate increase inositol trisphosphate and increase of intracellular Calcium. GNAT3 can functionally couple to taste receptors to transmit intracellular signal: receptor heterodimer TAS1R2/TAS1R3 senses sweetness and TAS1R1/TAS1R3 transduces umami taste, whereas the T2R family GPCRs act as bitter sensors. Also functions as lumenal sugar sensors in the gut to control the expression of the Na+-glucose transporter SGLT1 in response to dietaty sugar, as well as the secretion of Glucagon-like peptide-1, GLP-1 and glucose-dependent insulinotropic polypeptide, GIP. Thus, may modulate the gut capacity to absorb sugars, with implications for the prevention and treatment of malabsorption syndromes and diet-related disorders including diabetes and obesity. The sequence is that of Guanine nucleotide-binding protein G(t) subunit alpha-3 (Gnat3) from Rattus norvegicus (Rat).